The primary structure comprises 557 residues: MPIPVGNTKNDFAALQAKLDADAAEIEKWWSDSRWSKTKRNYSARDIAVRRGTFPPIEYPSSVMARKLFKVLEKHHNEGTVSKTFGALDPVQISQMAKYLDTIYISGWQCSSTASTSNEPGPDLADYPMDTVPNKVEHLFKAQLFHDRKQLEARSKAKSQEELDEMGAPIDYLTPIVADADAGHGGLTAVFKLTKMFIERGAAGIHMEDQTSTNKKCGHMAGRCVIPVQEHVNRLVTIRMCADIMHSDLIVVARTDSEAATLISSTIDTRDHYFIVGATNPNIEPFAEVLNDAIMSGASGQELADIEQKWCRDAGLKLFHEAVIDEIERSALSNKQELIKKFTSKVGPLTETSHREAKKLAKEILGHEIFFDWELPRVREGLYRYRGGTQCSIMRARAFAPYADLVWMESNYPDFQQAKEFAEGVKEKFPDQWLAYNLSPSFNWPKAMSVDEQHTFIQRLGDLGYIWQFITLAGLHTNALAVHNFSRDFAKDGMKAYAQNVQQREMDDGVDVLKHQKWSGAEYIDGLLKLAQGGVSATAAMGTGVTEDQFKENGVKK.

Position 53 is a phosphothreonine (Thr-53). 106-108 (SGW) is a substrate binding site. Asp-179 lines the Mg(2+) pocket. The active-site Proton acceptor is the Cys-217. Substrate contacts are provided by residues 218 to 219 (GH), Arg-254, 437 to 441 (NLSPS), and Thr-471.

Belongs to the isocitrate lyase/PEP mutase superfamily. Isocitrate lyase family. Homotetramer. Mg(2+) is required as a cofactor. Phosphorylated in response to elevated glucose levels, leading first to reversible inactivation of the enzyme (short-term inactivation), and at a later stage to proteolytic degradation of the protein (long-term inactivation).

Its subcellular location is the cytoplasm. The protein localises to the secreted. It localises to the extracellular space. The protein resides in the extracellular matrix. It is found in the vacuole. The catalysed reaction is D-threo-isocitrate = glyoxylate + succinate. It catalyses the reaction (2S,3R)-3-hydroxybutane-1,2,3-tricarboxylate = pyruvate + succinate. It participates in carbohydrate metabolism; glyoxylate cycle; (S)-malate from isocitrate: step 1/2. With respect to regulation, phosphorylated and inactivated after addition of glucose to the cell culture (repressing conditions). In terms of biological role, catalyzes the formation of succinate and glyoxylate from isocitrate, a key step of the glyoxylate cycle, which operates as an anaplerotic route for replenishing the tricarboxylic acid cycle. Required for growth on ethanol or acetate, but dispensable when fermentable carbon sources are available. Also acts on 2-methylisocitrate. In Saccharomyces cerevisiae (strain ATCC 204508 / S288c) (Baker's yeast), this protein is Isocitrate lyase.